Consider the following 363-residue polypeptide: N-acetylmuramate/N-acetylglucosamine kinase (363 aa).

It belongs to the kinase AmgK family.

The catalysed reaction is N-acetyl-D-muramate + ATP = N-acetyl-alpha-D-muramate 1-phosphate + ADP + H(+). The enzyme catalyses N-acetyl-D-glucosamine + ATP = N-acetyl-alpha-D-glucosamine 1-phosphate + ADP + H(+). Its pathway is cell wall biogenesis; peptidoglycan recycling. In terms of biological role, sugar kinase that catalyzes the ATP-dependent phosphorylation of N-acetylmuramate (MurNAc) and N-acetylglucosamine (GlcNAc) at its C1 hydroxyl group, leading to MurNAc alpha-1P and GlcNAc alpha-1P, respectively. Is likely involved in peptidoglycan recycling as part of a cell wall recycling pathway that bypasses de novo biosynthesis of the peptidoglycan precursor UDP-MurNAc. Is able to complement the fosfomycin sensitivity phenotype of a P.putida mutant lacking amgK. This chain is N-acetylmuramate/N-acetylglucosamine kinase, found in Caulobacter vibrioides (strain ATCC 19089 / CIP 103742 / CB 15) (Caulobacter crescentus).